We begin with the raw amino-acid sequence, 457 residues long: Argininosuccinate lyase (457 aa).

It belongs to the lyase 1 family. Argininosuccinate lyase subfamily.

It localises to the cytoplasm. The catalysed reaction is 2-(N(omega)-L-arginino)succinate = fumarate + L-arginine. Its pathway is amino-acid biosynthesis; L-arginine biosynthesis; L-arginine from L-ornithine and carbamoyl phosphate: step 3/3. The sequence is that of Argininosuccinate lyase from Klebsiella pneumoniae (strain 342).